An 88-amino-acid polypeptide reads, in one-letter code: Small ribosomal subunit protein bS16 (88 aa).

Belongs to the bacterial ribosomal protein bS16 family.

The chain is Small ribosomal subunit protein bS16 from Anaeromyxobacter sp. (strain Fw109-5).